A 440-amino-acid chain; its full sequence is UPF0761 membrane protein Rru_A2625 (440 aa).

Transmembrane regions (helical) follow at residues 29–49 (ILATAGSFTILVLRALITHDI), 61–81 (LLALVPLIAIALAILAAFPGF), 117–137 (GLTALGVAGLTLTAIILLLTI), 157–177 (LLVYWSVLTGGPLLMGLSFSL), 201–221 (PTLGPPLLSLTAMTLLYMLVP), 224–244 (PVPLFHALAGALVATLASALL), and 264–284 (ALAALPAFLVWMYLSWAVVLM).

The protein belongs to the UPF0761 family.

It is found in the cell inner membrane. The chain is UPF0761 membrane protein Rru_A2625 from Rhodospirillum rubrum (strain ATCC 11170 / ATH 1.1.1 / DSM 467 / LMG 4362 / NCIMB 8255 / S1).